The following is a 1481-amino-acid chain: Structural protein ORF147 (1481 aa).

Disordered stretches follow at residues 65 to 88 and 1319 to 1403; these read AEKR…ENLE and DEKL…PPIP. Composition is skewed to low complexity over residues 73-84, 1323-1336, and 1393-1403; these read KGSQKKSNSSSS, SSTV…SPKT, and SSRTTITPPIP.

Its subcellular location is the virion. In Noctuidae (owlet moths), this protein is Structural protein ORF147.